Consider the following 491-residue polypeptide: MTITPPPSDTEVSVLENKNLGRITQIIGPVLDVVFPPGKMPYIYNALIVQGRDTVGKQINVTCEVQQLLGNNRIRAVAMSATDGLKRGMEVIDTGAALSVPVGGATLGRIFNVLGEPIDNLGPVDTRTTSPIHRSAPAFIQLDTQLSIFETGIKVVDLLAPYRRGGKIGLFGGAGVGKTVLIMELINNIAKAHGGVSVFGGVGERTREGNDLYMEMKESRVINEKNIAESKVALVYGQMNEPPGARMRVGLTALTMAEYFRDVNEQDVLLFIDNIFRFVQAGSEVSALLGRMPSAVGYQPTLGTEMGTLQERITSTKEGSITSIQAVYVPADDLTDPAPATTFAHLDATTVLSRGLAAKGIYPAVDPLDSTSTMLQPRIVGEEHYETAQRVKQTLQRYKELQDMIAILGLDEVSEEDRLTVARARKIERFFSQPFFVAEVFTGSPGKYVGLAETIRGFQLILSGELDSLPEQAFYLVGNIDEATAKATNLT.

An ATP-binding site is contributed by 172–179; that stretch reads GGAGVGKT.

Belongs to the ATPase alpha/beta chains family. In terms of assembly, F-type ATPases have 2 components, CF(1) - the catalytic core - and CF(0) - the membrane proton channel. CF(1) has five subunits: alpha(3), beta(3), gamma(1), delta(1), epsilon(1). CF(0) has four main subunits: a(1), b(1), b'(1) and c(9-12).

The protein localises to the plastid. It localises to the chloroplast thylakoid membrane. The enzyme catalyses ATP + H2O + 4 H(+)(in) = ADP + phosphate + 5 H(+)(out). In terms of biological role, produces ATP from ADP in the presence of a proton gradient across the membrane. The catalytic sites are hosted primarily by the beta subunits. The protein is ATP synthase subunit beta, chloroplastic of Pisum sativum (Garden pea).